Here is a 260-residue protein sequence, read N- to C-terminus: Proteasome subunit alpha (260 aa).

Positions 231–260 (LLPEDFSPGQTEGGGDPAPESGDSKDAKDN) are disordered.

It belongs to the peptidase T1A family. As to quaternary structure, the 20S proteasome core is composed of 14 alpha and 14 beta subunits that assemble into four stacked heptameric rings, resulting in a barrel-shaped structure. The two inner rings, each composed of seven catalytic beta subunits, are sandwiched by two outer rings, each composed of seven alpha subunits. The catalytic chamber with the active sites is on the inside of the barrel. Has a gated structure, the ends of the cylinder being occluded by the N-termini of the alpha-subunits. Is capped by the proteasome-associated ATPase, ARC.

The protein resides in the cytoplasm. It functions in the pathway protein degradation; proteasomal Pup-dependent pathway. The formation of the proteasomal ATPase ARC-20S proteasome complex, likely via the docking of the C-termini of ARC into the intersubunit pockets in the alpha-rings, may trigger opening of the gate for substrate entry. Interconversion between the open-gate and close-gate conformations leads to a dynamic regulation of the 20S proteasome proteolysis activity. In terms of biological role, component of the proteasome core, a large protease complex with broad specificity involved in protein degradation. The protein is Proteasome subunit alpha of Mycobacteroides abscessus (strain ATCC 19977 / DSM 44196 / CCUG 20993 / CIP 104536 / JCM 13569 / NCTC 13031 / TMC 1543 / L948) (Mycobacterium abscessus).